Reading from the N-terminus, the 607-residue chain is MFSHQDKVGAFYKNNARANSSKLSLVTDEVEERRSPWFLSILLILLVGILILLTITGIRFHQVVKSNLEFNKLLIEDMEKTEAVHHQVKDVLTPLFKIIGDEVGLRLPQKLNEIKQFIVQKTNFFNPNREFDFRELHWCINPPSKVKVNFTQYCEITEFKEATRSVANSILLLTLYRGRDDIFPPYKCRGATTSMGNVFPLAVSLSMSLISKPSEVINMLTAISEGIYGKTYLLVTDDTEENFETPEIRVFEIGFINRWLGDMPLFQTTNYRIISNNSNTKICTIAVGELALASLCTKESTILPNLGDEESQNSVLVVILGLFGATHMDQLEEVIPVAHPSIEKIHITNHRGFIKDSVATWMVPALALSEQGEQINCLSSACKRRTYPMCNQTSWEPFGDKRLPSYGRLTLSLDVSTDLSINVSVAQGPIIFNGDGMDYYEGTLLNSGWLTIPPKNGTILGLINQASKGDQFIVTPHILTFAPRESSTDCHLPIQTYQIQDDDVLLESNLVVLPTQSFEYVVATYDVSRSDHAIVYYVYDPARTVSYTYPFRLRTKGRPDILRIECFVWDGHLWCHQFYRFQLDATNSTSVVENLIRIRFSCDRLDP.

Topologically, residues 1-38 are intravirion; the sequence is MFSHQDKVGAFYKNNARANSSKLSLVTDEVEERRSPWF. The chain crosses the membrane as a helical; Signal-anchor for type II membrane protein span at residues 39-55; sequence LSILLILLVGILILLTI. Residues 56-607 lie on the Virion surface side of the membrane; the sequence is TGIRFHQVVK…IRFSCDRLDP (552 aa). N-linked (GlcNAc...) asparagine; by host glycans are attached at residues N149, N276, N391, N422, N456, and N587.

The protein belongs to the paramyxoviruses hemagglutinin-neuraminidase family. Non-sialidase subfamily.

The protein resides in the virion membrane. It is found in the host membrane. Its function is as follows. Attaches the virus to cell receptors and thereby initiating infection. Binding of H protein to the receptor induces a conformational change that allows the F protein to trigger virion/cell membranes fusion. This Phocidae (true seals) protein is Hemagglutinin glycoprotein (H).